The following is a 328-amino-acid chain: Nickel import system permease protein NikB (328 aa).

6 consecutive transmembrane segments (helical) span residues 11–31, 104–124, 139–159, 170–190, 229–249, and 279–299; these read LMQM…LMKL, LLIS…LGII, VIST…LLFI, ILSQ…AYII, ILPI…GTVV, and VLFI…LTLL. The region spanning 100-297 is the ABC transmembrane type-1 domain; sequence APITLLISFS…IINTIADLLT (198 aa).

This sequence belongs to the binding-protein-dependent transport system permease family. OppBC subfamily. In terms of assembly, the complex is composed of two ATP-binding proteins (NikD and NikE), two transmembrane proteins (NikB and NikC) and a solute-binding protein (NikA).

Its subcellular location is the cell membrane. Functionally, part of the ABC transporter complex NikABCDE (Opp2) involved in nickel import. Probably responsible for the translocation of the substrate across the membrane. This Staphylococcus aureus (strain Mu50 / ATCC 700699) protein is Nickel import system permease protein NikB.